The sequence spans 489 residues: Ribonuclease G (489 aa).

The 90-residue stretch at 39-128 (GNIYKGRVSR…LTTDITLPSR (90 aa)) folds into the S1 motif domain. Positions 304 and 347 each coordinate Mg(2+).

Belongs to the RNase E/G family. RNase G subfamily. Homodimer, and possible higher multimers. Mg(2+) serves as cofactor.

It localises to the cytoplasm. Acts in the processing of the 5'-end of precursors of 16S rRNA. Confers adaptive resistance to aminoglycoside antibiotics through modulation of 16S rRNA processing. An endoribonuclease, it prefers 5'-monophosphorylated substrates and cleaves single-stranded sites rich in A and U residues; also contributes to 23S rRNA processing, tRNA processing and mRNA turnover. Involved in decay of speF mRNA, has a preference for adenine nucleotides. This Salmonella typhimurium (strain SL1344) protein is Ribonuclease G.